A 333-amino-acid chain; its full sequence is uncharacterized protein (333 aa).

This is an uncharacterized protein from Ictalurid herpesvirus 1 (strain Auburn) (IcHV-1).